Reading from the N-terminus, the 188-residue chain is Adenine phosphoribosyltransferase (188 aa).

Belongs to the purine/pyrimidine phosphoribosyltransferase family. As to quaternary structure, homodimer.

The protein resides in the cytoplasm. The enzyme catalyses AMP + diphosphate = 5-phospho-alpha-D-ribose 1-diphosphate + adenine. It participates in purine metabolism; AMP biosynthesis via salvage pathway; AMP from adenine: step 1/1. Catalyzes a salvage reaction resulting in the formation of AMP, that is energically less costly than de novo synthesis. In Neisseria meningitidis serogroup A / serotype 4A (strain DSM 15465 / Z2491), this protein is Adenine phosphoribosyltransferase.